The sequence spans 352 residues: UDP-N-acetylglucosamine--N-acetylmuramyl-(pentapeptide) pyrophosphoryl-undecaprenol N-acetylglucosamine transferase 2 (352 aa).

UDP-N-acetyl-alpha-D-glucosamine is bound by residues 11–13, Arg164, Ser194, and Gln289; that span reads SAG.

Belongs to the glycosyltransferase 28 family. MurG subfamily.

It is found in the cell membrane. It catalyses the reaction di-trans,octa-cis-undecaprenyl diphospho-N-acetyl-alpha-D-muramoyl-L-alanyl-D-glutamyl-meso-2,6-diaminopimeloyl-D-alanyl-D-alanine + UDP-N-acetyl-alpha-D-glucosamine = di-trans,octa-cis-undecaprenyl diphospho-[N-acetyl-alpha-D-glucosaminyl-(1-&gt;4)]-N-acetyl-alpha-D-muramoyl-L-alanyl-D-glutamyl-meso-2,6-diaminopimeloyl-D-alanyl-D-alanine + UDP + H(+). The protein operates within cell wall biogenesis; peptidoglycan biosynthesis. In terms of biological role, cell wall formation. Catalyzes the transfer of a GlcNAc subunit on undecaprenyl-pyrophosphoryl-MurNAc-pentapeptide (lipid intermediate I) to form undecaprenyl-pyrophosphoryl-MurNAc-(pentapeptide)GlcNAc (lipid intermediate II). The sequence is that of UDP-N-acetylglucosamine--N-acetylmuramyl-(pentapeptide) pyrophosphoryl-undecaprenol N-acetylglucosamine transferase 2 from Bacillus cereus (strain ATCC 10987 / NRS 248).